Here is a 142-residue protein sequence, read N- to C-terminus: Protein lin-32 (142 aa).

The segment covering 30–48 (PLQSPNFSLDSPNYPDSLS) has biased composition (polar residues). A disordered region spans residues 30 to 66 (PLQSPNFSLDSPNYPDSLSNGGGKDDKKKCRRYKTPS). The region spanning 72–124 (MRRSAANERERRRMNTLNVAYDELREVLPEIDSGKKLSKFETLQMAQKYIECL) is the bHLH domain.

Forms a heterodimer with hlh-2. In terms of tissue distribution, expressed in PVD motor neurons.

The protein resides in the nucleus. Its function is as follows. Probable transcription factor which binds the E box motif 5'-CA[TC][AG]TG-3'. Essential for the specification of the neuroblast cell fate in the development of peripheral sense organs. Its role in the generation of sensory neurons may be through positively regulating the expression of the zinc finger protein ztf-11 during postdeirid neurogenesis. Required for specification of cell fate, acting in concert with lin-32, in the development of the male-specific genital sensilla (simple sense organs) known as rays. Involved in regulating glial specification, perhaps by suppressing a glial fate in different lineages during early embryogenesis. The sequence is that of Protein lin-32 from Caenorhabditis elegans.